The following is a 418-amino-acid chain: Deubiquitinase and deneddylase Dub1 (418 aa).

The span at Met1–Thr11 shows a compositional bias: polar residues. A disordered region spans residues Met1–Val23. The chain crosses the membrane as a helical span at residues Thr40 to Phe60. Positions Thr72–Lys145 are disordered. Residues Val86–Pro141 are compositionally biased toward pro residues. Residues His288, Asp305, and Cys358 contribute to the active site.

This sequence belongs to the peptidase C48 family.

It is found in the secreted. Its subcellular location is the host cell. It localises to the membrane. Functionally, effector proteins function to alter host cell physiology and promote bacterial survival in host tissues. This protease possesses deubiquitinating and deneddylating activities. This Chlamydia trachomatis serovar E (strain Sweden2) protein is Deubiquitinase and deneddylase Dub1 (cdu1).